A 959-amino-acid polypeptide reads, in one-letter code: Translation initiation factor IF-2 (959 aa).

The span at 1–10 (MSDKTNDDKT) shows a compositional bias: basic and acidic residues. A disordered region spans residues 1–374 (MSDKTNDDKT…SQMQETREKI (374 aa)). The span at 27 to 37 (EQSTVRQNFSH) shows a compositional bias: polar residues. Low complexity-rich tracts occupy residues 63–118 (AAAA…VTKP) and 128–138 (QRPGGQQAQRP). 2 stretches are compositionally biased toward basic and acidic residues: residues 154–225 (SEMD…EAAK) and 232–241 (ARSERRDDAR). Residues 246–284 (GARPQQAGRPQGGRPQPAGRPQQGSPRPAPIIADAAPIA) show a composition bias toward low complexity. Positions 318-333 (PEVRAPKVVKGEDDRR) are enriched in basic and acidic residues. One can recognise a tr-type G domain in the interval 457–626 (SRPPVVTIMG…LLQAEMLDLK (170 aa)). The tract at residues 466 to 473 (GHVDHGKT) is G1. A GTP-binding site is contributed by 466–473 (GHVDHGKT). The segment at 491–495 (GITQH) is G2. Positions 512-515 (DTPG) are G3. Residues 512 to 516 (DTPGH) and 566 to 569 (NKID) each bind GTP. Residues 566 to 569 (NKID) form a G4 region. The G5 stretch occupies residues 602 to 604 (SAK).

The protein belongs to the TRAFAC class translation factor GTPase superfamily. Classic translation factor GTPase family. IF-2 subfamily.

It localises to the cytoplasm. Its function is as follows. One of the essential components for the initiation of protein synthesis. Protects formylmethionyl-tRNA from spontaneous hydrolysis and promotes its binding to the 30S ribosomal subunits. Also involved in the hydrolysis of GTP during the formation of the 70S ribosomal complex. The polypeptide is Translation initiation factor IF-2 (Brucella canis (strain ATCC 23365 / NCTC 10854 / RM-666)).